A 349-amino-acid chain; its full sequence is DNA polymerase IV (349 aa).

Positions Ile7 to Gly188 constitute a UmuC domain. Residues Asp11 and Asp106 each coordinate Mg(2+). Glu107 is an active-site residue.

Belongs to the DNA polymerase type-Y family. In terms of assembly, monomer. The cofactor is Mg(2+).

It is found in the cytoplasm. It carries out the reaction DNA(n) + a 2'-deoxyribonucleoside 5'-triphosphate = DNA(n+1) + diphosphate. Poorly processive, error-prone DNA polymerase involved in untargeted mutagenesis. Copies undamaged DNA at stalled replication forks, which arise in vivo from mismatched or misaligned primer ends. These misaligned primers can be extended by PolIV. Exhibits no 3'-5' exonuclease (proofreading) activity. May be involved in translesional synthesis, in conjunction with the beta clamp from PolIII. The polypeptide is DNA polymerase IV (Francisella tularensis subsp. holarctica (strain OSU18)).